The sequence spans 88 residues: DNA-directed RNA polymerase subunit omega (88 aa).

This sequence belongs to the RNA polymerase subunit omega family. In terms of assembly, the RNAP catalytic core consists of 2 alpha, 1 beta, 1 beta' and 1 omega subunit. When a sigma factor is associated with the core the holoenzyme is formed, which can initiate transcription.

The catalysed reaction is RNA(n) + a ribonucleoside 5'-triphosphate = RNA(n+1) + diphosphate. Functionally, promotes RNA polymerase assembly. Latches the N- and C-terminal regions of the beta' subunit thereby facilitating its interaction with the beta and alpha subunits. The polypeptide is DNA-directed RNA polymerase subunit omega (Pseudomonas aeruginosa (strain LESB58)).